A 50-amino-acid polypeptide reads, in one-letter code: Cytochrome c oxidase subunit 4 (50 aa).

Over Ala-2 to Ile-17 the chain is Cytoplasmic. The chain crosses the membrane as a helical span at residues Arg-18–Asn-49. Ser-50 is a topological domain (periplasmic).

Its subcellular location is the cell inner membrane. It carries out the reaction 4 Fe(II)-[cytochrome c] + O2 + 8 H(+)(in) = 4 Fe(III)-[cytochrome c] + 2 H2O + 4 H(+)(out). Functionally, not required for enzymatic activity or proton pumping of the cytochrome c oxidase complex. The protein is Cytochrome c oxidase subunit 4 (ctaH) of Paracoccus denitrificans.